Reading from the N-terminus, the 650-residue chain is 1-deoxy-D-xylulose-5-phosphate synthase (650 aa).

Thiamine diphosphate contacts are provided by residues His73 and 114–116 (SHA). Asp145 contacts Mg(2+). Thiamine diphosphate is bound by residues 146–147 (GA), Asn174, Tyr285, and Glu367. Asn174 is a binding site for Mg(2+). The disordered stretch occupies residues 631-650 (MGDEVGADESNQTPAGGGQA).

This sequence belongs to the transketolase family. DXPS subfamily. As to quaternary structure, homodimer. Mg(2+) serves as cofactor. Requires thiamine diphosphate as cofactor.

The enzyme catalyses D-glyceraldehyde 3-phosphate + pyruvate + H(+) = 1-deoxy-D-xylulose 5-phosphate + CO2. Its pathway is metabolic intermediate biosynthesis; 1-deoxy-D-xylulose 5-phosphate biosynthesis; 1-deoxy-D-xylulose 5-phosphate from D-glyceraldehyde 3-phosphate and pyruvate: step 1/1. In terms of biological role, catalyzes the acyloin condensation reaction between C atoms 2 and 3 of pyruvate and glyceraldehyde 3-phosphate to yield 1-deoxy-D-xylulose-5-phosphate (DXP). The protein is 1-deoxy-D-xylulose-5-phosphate synthase of Parafrankia sp. (strain EAN1pec).